The chain runs to 274 residues: Orotidine 5'-phosphate decarboxylase (274 aa).

Substrate-binding positions include Asp-40, 62 to 64 (KTH), 93 to 102 (DRKFVDIGNT), Tyr-227, and Arg-245. Lys-95 acts as the Proton donor in catalysis.

The protein belongs to the OMP decarboxylase family.

It carries out the reaction orotidine 5'-phosphate + H(+) = UMP + CO2. It functions in the pathway pyrimidine metabolism; UMP biosynthesis via de novo pathway; UMP from orotate: step 2/2. In Coccidioides immitis (strain RS) (Valley fever fungus), this protein is Orotidine 5'-phosphate decarboxylase (URA3).